The chain runs to 409 residues: NADH-quinone oxidoreductase subunit D (409 aa).

The protein belongs to the complex I 49 kDa subunit family. In terms of assembly, NDH-1 is composed of 14 different subunits. Subunits NuoB, C, D, E, F, and G constitute the peripheral sector of the complex.

Its subcellular location is the cell inner membrane. It carries out the reaction a quinone + NADH + 5 H(+)(in) = a quinol + NAD(+) + 4 H(+)(out). Its function is as follows. NDH-1 shuttles electrons from NADH, via FMN and iron-sulfur (Fe-S) centers, to quinones in the respiratory chain. The immediate electron acceptor for the enzyme in this species is believed to be ubiquinone. Couples the redox reaction to proton translocation (for every two electrons transferred, four hydrogen ions are translocated across the cytoplasmic membrane), and thus conserves the redox energy in a proton gradient. This chain is NADH-quinone oxidoreductase subunit D, found in Helicobacter hepaticus (strain ATCC 51449 / 3B1).